Consider the following 336-residue polypeptide: Pyridoxal 5'-phosphate synthase subunit PdxS (336 aa).

Asp-30 contacts D-ribose 5-phosphate. Catalysis depends on Lys-87, which acts as the Schiff-base intermediate with D-ribose 5-phosphate. Residue Gly-159 participates in D-ribose 5-phosphate binding. A D-glyceraldehyde 3-phosphate-binding site is contributed by Arg-171. D-ribose 5-phosphate contacts are provided by residues Gly-257 and 278–279; that span reads GS.

Belongs to the PdxS/SNZ family. In terms of assembly, in the presence of PdxT, forms a dodecamer of heterodimers.

It carries out the reaction aldehydo-D-ribose 5-phosphate + D-glyceraldehyde 3-phosphate + L-glutamine = pyridoxal 5'-phosphate + L-glutamate + phosphate + 3 H2O + H(+). Its pathway is cofactor biosynthesis; pyridoxal 5'-phosphate biosynthesis. Its function is as follows. Catalyzes the formation of pyridoxal 5'-phosphate from ribose 5-phosphate (RBP), glyceraldehyde 3-phosphate (G3P) and ammonia. The ammonia is provided by the PdxT subunit. Can also use ribulose 5-phosphate and dihydroxyacetone phosphate as substrates, resulting from enzyme-catalyzed isomerization of RBP and G3P, respectively. In Thermoplasma acidophilum (strain ATCC 25905 / DSM 1728 / JCM 9062 / NBRC 15155 / AMRC-C165), this protein is Pyridoxal 5'-phosphate synthase subunit PdxS.